Here is a 177-residue protein sequence, read N- to C-terminus: VQ motif-containing protein 11 (177 aa).

Residues 25-34 carry the VQ motif; that stretch reads FRNIVQKLTG. A phosphoserine mark is found at serine 43, serine 99, serine 115, serine 142, and serine 145. A compositionally biased stretch (basic and acidic residues) spans 115 to 133; that stretch reads SAREEHHAQPDKEEQKAIA. The tract at residues 115–177 is disordered; sequence SAREEHHAQP…RIHEDNHRDS (63 aa). Low complexity predominate over residues 148–159; sequence EPAPELLPLFPL. Serine 161 is subject to Phosphoserine. Residues 168–177 show a composition bias toward basic and acidic residues; it reads RIHEDNHRDS.

Phosphorylated on serine residues by MPK6.

It localises to the nucleus. Its function is as follows. May modulate WRKY transcription factor activities. The protein is VQ motif-containing protein 11 of Arabidopsis thaliana (Mouse-ear cress).